Here is a 270-residue protein sequence, read N- to C-terminus: MGGQVRVAIVGAGGRMGRTLIEAAYHQEHILLGAAIERAGSSLVGIDAGELAGVGKLNVIIMDSLDYATDDFDVLIDFTAPDASIVHLDWCVRHKKAMVIGTTGFNQAQKIQINAFAEQTPVVMAPNMSVGVNLMWKLLELAAEVMGDYTDIEIIEGHHRHKKDAPSGTALKMGEVIAKTLGRDLEKCAVYGREGITGERDRETIGFATIRAGDLVGEHTAMFADIGERLEITHKASSRMTFANGAMRAARWVVEQKPGLYDMQQVLGLN.

NAD(+)-binding positions include 11 to 16 (GAGGRM) and glutamate 37. Residue arginine 38 participates in NADP(+) binding. NAD(+)-binding positions include 101 to 103 (GTT) and 125 to 128 (APNM). The active-site Proton donor/acceptor is the histidine 158. Histidine 159 contributes to the (S)-2,3,4,5-tetrahydrodipicolinate binding site. Lysine 162 serves as the catalytic Proton donor. 168–169 (GT) is a (S)-2,3,4,5-tetrahydrodipicolinate binding site.

This sequence belongs to the DapB family.

It localises to the cytoplasm. The catalysed reaction is (S)-2,3,4,5-tetrahydrodipicolinate + NAD(+) + H2O = (2S,4S)-4-hydroxy-2,3,4,5-tetrahydrodipicolinate + NADH + H(+). It carries out the reaction (S)-2,3,4,5-tetrahydrodipicolinate + NADP(+) + H2O = (2S,4S)-4-hydroxy-2,3,4,5-tetrahydrodipicolinate + NADPH + H(+). It participates in amino-acid biosynthesis; L-lysine biosynthesis via DAP pathway; (S)-tetrahydrodipicolinate from L-aspartate: step 4/4. Catalyzes the conversion of 4-hydroxy-tetrahydrodipicolinate (HTPA) to tetrahydrodipicolinate. The polypeptide is 4-hydroxy-tetrahydrodipicolinate reductase (Shewanella sp. (strain W3-18-1)).